The primary structure comprises 199 residues: Glycerol-3-phosphate acyltransferase (199 aa).

The next 5 helical transmembrane spans lie at 4-24 (FALF…AILI), 56-76 (LAVL…GYYL), 80-100 (QFEL…PIFF), 115-135 (IAPI…FVFL), and 154-176 (YVWW…LIYR).

Belongs to the PlsY family. As to quaternary structure, probably interacts with PlsX.

Its subcellular location is the cell inner membrane. The enzyme catalyses an acyl phosphate + sn-glycerol 3-phosphate = a 1-acyl-sn-glycero-3-phosphate + phosphate. Its pathway is lipid metabolism; phospholipid metabolism. Its function is as follows. Catalyzes the transfer of an acyl group from acyl-phosphate (acyl-PO(4)) to glycerol-3-phosphate (G3P) to form lysophosphatidic acid (LPA). This enzyme utilizes acyl-phosphate as fatty acyl donor, but not acyl-CoA or acyl-ACP. The polypeptide is Glycerol-3-phosphate acyltransferase (Haemophilus influenzae (strain PittGG)).